A 197-amino-acid chain; its full sequence is DNA-directed RNA polymerases I, II, and III subunit rpabc1 (197 aa).

It belongs to the archaeal Rpo5/eukaryotic RPB5 RNA polymerase subunit family. Component of the RNA polymerase I (Pol I), RNA polymerase II (Pol II) and RNA polymerase III (Pol III) complexes consisting of at least 13, 12 and 17 subunits, respectively. In RNA Pol II, this subunit is present in 2-fold molar excess over the other subunits.

It is found in the nucleus. Its function is as follows. DNA-dependent RNA polymerase catalyzes the transcription of DNA into RNA using the four ribonucleoside triphosphates as substrates. Common component of RNA polymerases I, II and III which synthesize ribosomal RNA precursors, mRNA precursors and many functional non-coding RNAs, and small RNAs, such as 5S rRNA and tRNAs, respectively. Pol II is the central component of the basal RNA polymerase II transcription machinery. Pols are composed of mobile elements that move relative to each other. In Pol II, RPB5 is part of the lower jaw surrounding the central large cleft and thought to grab the incoming DNA template. Seems to be the major component in this process. The protein is DNA-directed RNA polymerases I, II, and III subunit rpabc1 (polr2e) of Dictyostelium discoideum (Social amoeba).